Here is a 225-residue protein sequence, read N- to C-terminus: Rho GDP-dissociation inhibitor 3 (225 aa).

Belongs to the Rho GDI family. As to expression, detected only in brain, lung, kidney and testis.

The protein resides in the cytoplasm. In terms of biological role, inhibits GDP/GTP exchange reaction of RhoB. Interacts specifically with the GDP- and GTP-bound forms of post-translationally processed Rhob and Rhog proteins, both of which show a growth-regulated expression in mammalian cells. Stimulates the release of the GDP-bound but not the GTP-bound RhoB protein. Also inhibits the GDP/GTP exchange of RhoB but shows less ability to inhibit the dissociation of prebound GTP. The chain is Rho GDP-dissociation inhibitor 3 (Arhgdig) from Mus musculus (Mouse).